The sequence spans 217 residues: 3,4-dihydroxy-2-butanone 4-phosphate synthase (217 aa).

Residues 37–38, Asp42, 150–154, and Glu174 each bind D-ribulose 5-phosphate; these read RE and RGGHT. Glu38 lines the Mg(2+) pocket. His153 lines the Mg(2+) pocket.

The protein belongs to the DHBP synthase family. Homodimer. Mg(2+) serves as cofactor. The cofactor is Mn(2+).

The enzyme catalyses D-ribulose 5-phosphate = (2S)-2-hydroxy-3-oxobutyl phosphate + formate + H(+). The protein operates within cofactor biosynthesis; riboflavin biosynthesis; 2-hydroxy-3-oxobutyl phosphate from D-ribulose 5-phosphate: step 1/1. In terms of biological role, catalyzes the conversion of D-ribulose 5-phosphate to formate and 3,4-dihydroxy-2-butanone 4-phosphate. In Escherichia coli O127:H6 (strain E2348/69 / EPEC), this protein is 3,4-dihydroxy-2-butanone 4-phosphate synthase.